Consider the following 162-residue polypeptide: NADH-quinone oxidoreductase subunit I 2 (162 aa).

2 consecutive 4Fe-4S ferredoxin-type domains span residues 52 to 82 (LRRY…IEAG) and 93 to 122 (VRYD…EGPN). [4Fe-4S] cluster is bound by residues cysteine 62, cysteine 65, cysteine 68, cysteine 72, cysteine 102, cysteine 105, cysteine 108, and cysteine 112.

It belongs to the complex I 23 kDa subunit family. In terms of assembly, NDH-1 is composed of 14 different subunits. Subunits NuoA, H, J, K, L, M, N constitute the membrane sector of the complex. Requires [4Fe-4S] cluster as cofactor.

The protein resides in the cell inner membrane. It carries out the reaction a quinone + NADH + 5 H(+)(in) = a quinol + NAD(+) + 4 H(+)(out). Its function is as follows. NDH-1 shuttles electrons from NADH, via FMN and iron-sulfur (Fe-S) centers, to quinones in the respiratory chain. The immediate electron acceptor for the enzyme in this species is believed to be ubiquinone. Couples the redox reaction to proton translocation (for every two electrons transferred, four hydrogen ions are translocated across the cytoplasmic membrane), and thus conserves the redox energy in a proton gradient. This Rhodopseudomonas palustris (strain BisB5) protein is NADH-quinone oxidoreductase subunit I 2.